Consider the following 145-residue polypeptide: D-aminoacyl-tRNA deacylase (145 aa).

The short motif at 137–138 (GP) is the Gly-cisPro motif, important for rejection of L-amino acids element.

The protein belongs to the DTD family. As to quaternary structure, homodimer.

The protein localises to the cytoplasm. It catalyses the reaction glycyl-tRNA(Ala) + H2O = tRNA(Ala) + glycine + H(+). The catalysed reaction is a D-aminoacyl-tRNA + H2O = a tRNA + a D-alpha-amino acid + H(+). Functionally, an aminoacyl-tRNA editing enzyme that deacylates mischarged D-aminoacyl-tRNAs. Also deacylates mischarged glycyl-tRNA(Ala), protecting cells against glycine mischarging by AlaRS. Acts via tRNA-based rather than protein-based catalysis; rejects L-amino acids rather than detecting D-amino acids in the active site. By recycling D-aminoacyl-tRNA to D-amino acids and free tRNA molecules, this enzyme counteracts the toxicity associated with the formation of D-aminoacyl-tRNA entities in vivo and helps enforce protein L-homochirality. This is D-aminoacyl-tRNA deacylase from Legionella pneumophila (strain Lens).